A 95-amino-acid polypeptide reads, in one-letter code: DNA-directed RNA polymerase subunit Rpo11 (95 aa).

It belongs to the archaeal Rpo11/eukaryotic RPB11/RPC19 RNA polymerase subunit family. In terms of assembly, part of the RNA polymerase complex.

It is found in the cytoplasm. The catalysed reaction is RNA(n) + a ribonucleoside 5'-triphosphate = RNA(n+1) + diphosphate. DNA-dependent RNA polymerase (RNAP) catalyzes the transcription of DNA into RNA using the four ribonucleoside triphosphates as substrates. This chain is DNA-directed RNA polymerase subunit Rpo11, found in Pyrococcus abyssi (strain GE5 / Orsay).